We begin with the raw amino-acid sequence, 138 residues long: ATP synthase epsilon chain (138 aa).

A disordered region spans residues 88-119 (DREEARSTLSAAQARLDQSEQSEDKQERYEAQ). Basic and acidic residues predominate over residues 109–119 (SEDKQERYEAQ).

This sequence belongs to the ATPase epsilon chain family. F-type ATPases have 2 components, CF(1) - the catalytic core - and CF(0) - the membrane proton channel. CF(1) has five subunits: alpha(3), beta(3), gamma(1), delta(1), epsilon(1). CF(0) has three main subunits: a, b and c.

The protein localises to the cellular thylakoid membrane. In terms of biological role, produces ATP from ADP in the presence of a proton gradient across the membrane. This chain is ATP synthase epsilon chain, found in Acaryochloris marina (strain MBIC 11017).